The sequence spans 291 residues: 3-hydroxy-5-phosphonooxypentane-2,4-dione thiolase (291 aa).

Lys-203 serves as the catalytic Schiff-base intermediate with substrate.

This sequence belongs to the DeoC/FbaB aldolase family. In terms of assembly, homodecamer.

Its subcellular location is the cytoplasm. It carries out the reaction dihydroxyacetone phosphate + acetyl-CoA = 3-hydroxy-2,4-dioxopentyl phosphate + CoA. In terms of biological role, involved in the degradation of phospho-AI-2, thereby terminating induction of the lsr operon and closing the AI-2 signaling cycle. Catalyzes the transfer of an acetyl moiety from 3-hydroxy-5-phosphonooxypentane-2,4-dione to CoA to form glycerone phosphate and acetyl-CoA. The polypeptide is 3-hydroxy-5-phosphonooxypentane-2,4-dione thiolase (Salmonella paratyphi A (strain ATCC 9150 / SARB42)).